The primary structure comprises 141 residues: MRQRTIVCPLIQNDGCYLLCKMADNRGVFPGQWALSGGGVEPGERIEEALRREIREELGEQLILSDITPWTFRDDIRVKTYADGRQEEIYMIYLIFDCVSANRDICINDEFQDYAWVKPEELALYDLNVATRHTLALKGLL.

The region spanning 1–141 (MRQRTIVCPL…RHTLALKGLL (141 aa)) is the Nudix hydrolase domain. The Nudix box motif lies at 38–59 (GGVEPGERIEEALRREIREELG).

It belongs to the Nudix hydrolase family. NudI subfamily. In terms of assembly, monomer. Mg(2+) serves as cofactor.

It carries out the reaction a ribonucleoside 5'-triphosphate + H2O = a ribonucleoside 5'-phosphate + diphosphate + H(+). The catalysed reaction is a 2'-deoxyribonucleoside 5'-triphosphate + H2O = a 2'-deoxyribonucleoside 5'-phosphate + diphosphate + H(+). It catalyses the reaction dUTP + H2O = dUMP + diphosphate + H(+). The enzyme catalyses dTTP + H2O = dTMP + diphosphate + H(+). It carries out the reaction dCTP + H2O = dCMP + diphosphate + H(+). In terms of biological role, catalyzes the hydrolysis of nucleoside triphosphates, with a preference for pyrimidine deoxynucleoside triphosphates (dUTP, dTTP and dCTP). In Salmonella newport (strain SL254), this protein is Nucleoside triphosphatase NudI.